The following is an 89-amino-acid chain: MAHKKSGGSSSNGRDSESKRLGVKKFGGEKVLAGNILVRQRGTKFYPGSGVGIGKDHTLFALVQGAVGFVTKKHNRTYVTVTPAAQPAE.

A disordered region spans residues 1–21 (MAHKKSGGSSSNGRDSESKRL).

The protein belongs to the bacterial ribosomal protein bL27 family.

This chain is Large ribosomal subunit protein bL27, found in Caulobacter vibrioides (strain NA1000 / CB15N) (Caulobacter crescentus).